The following is a 312-amino-acid chain: Phospholipid phosphatase 3 (312 aa).

Residues 1–33 (MQSYKYDKAIVPESKNGGSPALNNNPRKGGSKR) lie on the Cytoplasmic side of the membrane. The residue at position 19 (Ser-19) is a Phosphoserine. A helical membrane pass occupies residues 34-54 (VLLICLDLFCLFMAALPFLII). Residues 55-85 (ETSTIKPYRRGFYCNDESIKYPLKVSETIND) lie on the Extracellular side of the membrane. The chain crosses the membrane as a helical span at residues 86 to 106 (AVLCAVGIVIAILRIITGEFY). Residues 107–123 (RIYYLKEKSRSTIQNPY) are Cytoplasmic-facing. The Dityrosine basolateral targeting motif motif lies at 109 to 110 (YY). The chain crosses the membrane as a helical span at residues 124–144 (VAALYKQVGCFLFGCAISQSF). Residues 145 to 194 (TDIAKVSIGRLRPHFLSVCDPDFSQINCSEGYIQNYRCRGEDSKVQEARK) are Extracellular-facing. The phosphatase sequence motif I stretch occupies residues 149–157 (KVSIGRLRP). Asn-171 carries N-linked (GlcNAc...) asparagine glycosylation. An Integrin-binding motif motif is present at residues 183–185 (RGE). A helical membrane pass occupies residues 195 to 215 (SFFSGHASFSMFTMLYLVLYL). The segment at 197 to 200 (FSGH) is phosphatase sequence motif II. Residue His-200 is the Proton donors of the active site. Over 216-226 (QARFTWRGARL) the chain is Cytoplasmic. Residues 227-244 (LRPLLQFTLLMMAFYTGL) form a helical membrane-spanning segment. A phosphatase sequence motif III region spans residues 245-256 (SRVSDYKHHPSD). The Extracellular portion of the chain corresponds to 245–258 (SRVSDYKHHPSDVL). The active-site Nucleophile is the His-252. A helical membrane pass occupies residues 259–279 (AGFAQGALVACCIVFFVSDLF). The segment at 276–312 (SDLFKTKTTLSLPAPAIRREILSPVDIMDRSNHHNMV) is mediates interaction with CTNND1. Residues 280–312 (KTKTTLSLPAPAIRREILSPVDIMDRSNHHNMV) lie on the Cytoplasmic side of the membrane.

Belongs to the PA-phosphatase related phosphoesterase family. As to quaternary structure, forms functional homodimers and homooligomers that are not required for substrate recognition and catalytic activity. Can also form heterooligomers with other PLPP2 and PLPP3. Interacts with CTNND1; negatively regulates the PLPP3-mediated stabilization of beta-catenin/CTNNB1. In terms of processing, N-glycosylated. Contains high-mannose oligosaccharides. As to expression, detected in epithelial cells of intestinal mucosa, lung, liver and brain.

It is found in the cell membrane. It localises to the basolateral cell membrane. Its subcellular location is the endoplasmic reticulum membrane. The protein localises to the endoplasmic reticulum-Golgi intermediate compartment membrane. The protein resides in the golgi apparatus membrane. It is found in the golgi apparatus. It localises to the trans-Golgi network membrane. Its subcellular location is the membrane raft. The enzyme catalyses a 1,2-diacyl-sn-glycero-3-phosphate + H2O = a 1,2-diacyl-sn-glycerol + phosphate. It catalyses the reaction 1,2-dihexadecanoyl-sn-glycero-3-phosphate + H2O = 1,2-dihexadecanoyl-sn-glycerol + phosphate. It carries out the reaction 1,2-di-(9Z-octadecenoyl)-sn-glycero-3-phosphate + H2O = 1,2-di-(9Z-octadecenoyl)-sn-glycerol + phosphate. The catalysed reaction is a monoacyl-sn-glycero-3-phosphate + H2O = a monoacylglycerol + phosphate. The enzyme catalyses (9Z)-octadecenoyl-sn-glycero-3-phosphate + H2O = (9Z-octadecenoyl)-glycerol + phosphate. It catalyses the reaction sphing-4-enine 1-phosphate + H2O = sphing-4-enine + phosphate. It carries out the reaction an N-acylsphing-4-enine 1-phosphate + H2O = an N-acylsphing-4-enine + phosphate. The catalysed reaction is N-(octanoyl)-sphing-4-enine-1-phosphate + H2O = N-octanoylsphing-4-enine + phosphate. The enzyme catalyses N-(9Z-octadecenoyl)-ethanolamine phosphate + H2O = N-(9Z-octadecenoyl) ethanolamine + phosphate. It functions in the pathway lipid metabolism; phospholipid metabolism. Its activity is regulated as follows. Magnesium-independent phospholipid phosphatase. Insensitive to N-ethylmaleimide. Inhibited by sphingosine, zinc ions and modestly by propanolol. In terms of biological role, magnesium-independent phospholipid phosphatase of the plasma membrane that catalyzes the dephosphorylation of a variety of glycerolipid and sphingolipid phosphate esters including phosphatidate/PA, lysophosphatidate/LPA, diacylglycerol pyrophosphate/DGPP, sphingosine 1-phosphate/S1P and ceramide 1-phosphate/C1P. Also acts on N-oleoyl ethanolamine phosphate/N-(9Z-octadecenoyl)-ethanolamine phosphate, a potential physiological compound. Has both an extracellular and an intracellular phosphatase activity, allowing the hydrolysis and the cellular uptake of these bioactive lipid mediators from the milieu, regulating signal transduction in different cellular processes. Through the dephosphorylation of extracellular sphingosine-1-phosphate and the regulation of its extra- and intracellular availability, plays a role in vascular homeostasis, regulating endothelial cell migration, adhesion, survival, proliferation and the production of pro-inflammatory cytokines. By maintaining the appropriate levels of this lipid in the cerebellum, also ensure its proper development and function. Through its intracellular lipid phosphatase activity may act in early compartments of the secretory pathway, regulating the formation of Golgi to endoplasmic reticulum retrograde transport carriers. Independently of this phosphatase activity may also function in the Wnt signaling pathway and the stabilization of beta-catenin/CTNNB1, thereby regulating cell proliferation, migration and differentiation in angiogenesis or yet in tumor growth. Also plays a role in integrin-mediated cell-cell adhesion in angiogenesis. The protein is Phospholipid phosphatase 3 of Rattus norvegicus (Rat).